Consider the following 268-residue polypeptide: 4-hydroxy-tetrahydrodipicolinate reductase (268 aa).

Residues 8–13 (GAAGRM) and Glu-34 each bind NAD(+). Position 35 (Arg-35) interacts with NADP(+). NAD(+) contacts are provided by residues 96–98 (GST) and 120–123 (SPNM). The active-site Proton donor/acceptor is His-153. (S)-2,3,4,5-tetrahydrodipicolinate is bound at residue His-154. Lys-157 acts as the Proton donor in catalysis. (S)-2,3,4,5-tetrahydrodipicolinate is bound at residue 163-164 (GT).

Belongs to the DapB family.

The protein localises to the cytoplasm. The enzyme catalyses (S)-2,3,4,5-tetrahydrodipicolinate + NAD(+) + H2O = (2S,4S)-4-hydroxy-2,3,4,5-tetrahydrodipicolinate + NADH + H(+). It catalyses the reaction (S)-2,3,4,5-tetrahydrodipicolinate + NADP(+) + H2O = (2S,4S)-4-hydroxy-2,3,4,5-tetrahydrodipicolinate + NADPH + H(+). Its pathway is amino-acid biosynthesis; L-lysine biosynthesis via DAP pathway; (S)-tetrahydrodipicolinate from L-aspartate: step 4/4. Catalyzes the conversion of 4-hydroxy-tetrahydrodipicolinate (HTPA) to tetrahydrodipicolinate. The polypeptide is 4-hydroxy-tetrahydrodipicolinate reductase (Anaeromyxobacter sp. (strain Fw109-5)).